A 766-amino-acid chain; its full sequence is Ent-copalyl diphosphate synthase 3 (766 aa).

The transit peptide at 1–30 directs the protein to the chloroplast; the sequence is FRSTAAGRCLPVTCCVFPRHFRVSSSSILP. Lys-222 provides a ligand contact to substrate. Positions 354 and 356 each coordinate Mg(2+). The DXDD motif signature appears at 354 to 357; that stretch reads DVDD. Lys-440 contributes to the substrate binding site.

This sequence belongs to the terpene synthase family. Tpsc subfamily. It depends on Mg(2+) as a cofactor. Accumulates in leaves, and, at low levels, in germinating seeds.

It is found in the plastid. The protein resides in the chloroplast. The enzyme catalyses (2E,6E,10E)-geranylgeranyl diphosphate = ent-copalyl diphosphate. Its pathway is plant hormone biosynthesis; gibberellin biosynthesis. It participates in secondary metabolite biosynthesis; terpenoid biosynthesis. Its function is as follows. Involved in the biosynthesis of ent-kaurene diterpenoids natural products such as oridonin, miltiradiene, eriocalyxin B and nezukol, known to exhibit antitumor, anti-inflammatory and antibacterial activities, and in the production of gibberellins phytohormones. Catalyzes the conversion of (2E,6E,10E)-geranylgeranyl diphosphate (GGPP) to ent-copalyl diphosphate (ent-CPP). The sequence is that of Ent-copalyl diphosphate synthase 3 from Isodon eriocalyx (Plectranthus eriocalyx).